A 190-amino-acid chain; its full sequence is Protein GrpE (190 aa).

Polar residues predominate over residues 1–18 (MTETPNTSSEEIQTSEPS). The tract at residues 1-21 (MTETPNTSSEEIQTSEPSPDN) is disordered.

It belongs to the GrpE family. Homodimer.

The protein localises to the cytoplasm. In terms of biological role, participates actively in the response to hyperosmotic and heat shock by preventing the aggregation of stress-denatured proteins, in association with DnaK and GrpE. It is the nucleotide exchange factor for DnaK and may function as a thermosensor. Unfolded proteins bind initially to DnaJ; upon interaction with the DnaJ-bound protein, DnaK hydrolyzes its bound ATP, resulting in the formation of a stable complex. GrpE releases ADP from DnaK; ATP binding to DnaK triggers the release of the substrate protein, thus completing the reaction cycle. Several rounds of ATP-dependent interactions between DnaJ, DnaK and GrpE are required for fully efficient folding. In Chlamydia trachomatis serovar L2 (strain ATCC VR-902B / DSM 19102 / 434/Bu), this protein is Protein GrpE.